The primary structure comprises 204 residues: Guanylate kinase (204 aa).

A Guanylate kinase-like domain is found at 4–182; sequence GMLVVVSGPS…AVNDLEAVLT (179 aa). Position 11–18 (11–18) interacts with ATP; sequence GPSGAGKG.

It belongs to the guanylate kinase family.

It localises to the cytoplasm. The catalysed reaction is GMP + ATP = GDP + ADP. Functionally, essential for recycling GMP and indirectly, cGMP. The polypeptide is Guanylate kinase (Carboxydothermus hydrogenoformans (strain ATCC BAA-161 / DSM 6008 / Z-2901)).